The following is a 216-amino-acid chain: Octanoyltransferase (216 aa).

In terms of domain architecture, BPL/LPL catalytic spans 31-205; the sequence is STTRDEVWLV…ELVTLLDYEQ (175 aa). Residues 70-77, 137-139, and 150-152 contribute to the substrate site; these read RGGQVTYH, SLG, and GLA. Residue Cys-168 is the Acyl-thioester intermediate of the active site.

This sequence belongs to the LipB family.

The protein resides in the cytoplasm. It catalyses the reaction octanoyl-[ACP] + L-lysyl-[protein] = N(6)-octanoyl-L-lysyl-[protein] + holo-[ACP] + H(+). The protein operates within protein modification; protein lipoylation via endogenous pathway; protein N(6)-(lipoyl)lysine from octanoyl-[acyl-carrier-protein]: step 1/2. Catalyzes the transfer of endogenously produced octanoic acid from octanoyl-acyl-carrier-protein onto the lipoyl domains of lipoate-dependent enzymes. Lipoyl-ACP can also act as a substrate although octanoyl-ACP is likely to be the physiological substrate. This Vibrio cholerae serotype O1 (strain ATCC 39315 / El Tor Inaba N16961) protein is Octanoyltransferase.